The following is a 415-amino-acid chain: Procollagen C-endopeptidase enhancer 2 (415 aa).

An N-terminal signal peptide occupies residues 1–23 (MRGANAWAPLCLLLAAATQLSRQ). Disulfide bonds link Cys-33-Cys-59, Cys-86-Cys-107, Cys-154-Cys-181, Cys-208-Cys-231, Cys-297-Cys-364, Cys-301-Cys-367, and Cys-312-Cys-415. CUB domains lie at 33 to 144 (CGGI…FSAA) and 154 to 268 (CGGL…YIFR). An NTR domain is found at 297–415 (CQQKCRRTGT…LLDALKNKQC (119 aa)). An N-linked (GlcNAc...) asparagine glycan is attached at Asn-355.

In terms of assembly, interacts with heparin with high affinity, and type I or II collagen. O-glycosylated; contains sialic acid. In terms of tissue distribution, highly expressed in the heart, trabecular meshwork, pituitary gland, bladder, mammary gland, trachea and placenta and weakly expressed in the brain. Expressed in cartilage.

The protein localises to the secreted. Functionally, binds to the C-terminal propeptide of types I and II procollagens and may enhance the cleavage of that propeptide by BMP1. In Homo sapiens (Human), this protein is Procollagen C-endopeptidase enhancer 2 (PCOLCE2).